The primary structure comprises 275 residues: Diaminopimelate epimerase (275 aa).

Substrate-binding residues include asparagine 13, glutamine 46, and asparagine 65. Catalysis depends on cysteine 74, which acts as the Proton donor. Substrate-binding positions include 75–76 (GN), asparagine 158, asparagine 191, and 209–210 (ER). The Proton acceptor role is filled by cysteine 218. A substrate-binding site is contributed by 219-220 (GT).

It belongs to the diaminopimelate epimerase family. As to quaternary structure, homodimer.

It is found in the cytoplasm. It catalyses the reaction (2S,6S)-2,6-diaminopimelate = meso-2,6-diaminopimelate. The protein operates within amino-acid biosynthesis; L-lysine biosynthesis via DAP pathway; DL-2,6-diaminopimelate from LL-2,6-diaminopimelate: step 1/1. Catalyzes the stereoinversion of LL-2,6-diaminopimelate (L,L-DAP) to meso-diaminopimelate (meso-DAP), a precursor of L-lysine and an essential component of the bacterial peptidoglycan. This chain is Diaminopimelate epimerase, found in Nitrosomonas europaea (strain ATCC 19718 / CIP 103999 / KCTC 2705 / NBRC 14298).